The chain runs to 314 residues: Protoheme IX farnesyltransferase 2 (314 aa).

The next 9 helical transmembrane spans lie at 32 to 49 (VMSL…AAPV), 54 to 76 (LLAV…LNMW), 98 to 118 (IQPH…VMTL), 120 to 140 (VLVN…YAVV), 153 to 173 (IVIG…AVTG), 180 to 200 (IVLF…LALF), 226 to 246 (IFAY…LGYT), 249 to 269 (FYGV…WKVL), and 285 to 305 (FAYS…DSVV).

This sequence belongs to the UbiA prenyltransferase family. Protoheme IX farnesyltransferase subfamily.

Its subcellular location is the cell inner membrane. The enzyme catalyses heme b + (2E,6E)-farnesyl diphosphate + H2O = Fe(II)-heme o + diphosphate. It participates in porphyrin-containing compound metabolism; heme O biosynthesis; heme O from protoheme: step 1/1. Functionally, converts heme B (protoheme IX) to heme O by substitution of the vinyl group on carbon 2 of heme B porphyrin ring with a hydroxyethyl farnesyl side group. This is Protoheme IX farnesyltransferase 2 from Mesorhizobium japonicum (strain LMG 29417 / CECT 9101 / MAFF 303099) (Mesorhizobium loti (strain MAFF 303099)).